The following is a 106-amino-acid chain: Small ribosomal subunit protein bS6 (106 aa).

Belongs to the bacterial ribosomal protein bS6 family.

In terms of biological role, binds together with bS18 to 16S ribosomal RNA. The chain is Small ribosomal subunit protein bS6 from Cyanothece sp. (strain PCC 7425 / ATCC 29141).